The chain runs to 111 residues: Nucleoid-associated protein TTE0040 (111 aa).

It belongs to the YbaB/EbfC family. In terms of assembly, homodimer.

The protein localises to the cytoplasm. Its subcellular location is the nucleoid. In terms of biological role, binds to DNA and alters its conformation. May be involved in regulation of gene expression, nucleoid organization and DNA protection. In Caldanaerobacter subterraneus subsp. tengcongensis (strain DSM 15242 / JCM 11007 / NBRC 100824 / MB4) (Thermoanaerobacter tengcongensis), this protein is Nucleoid-associated protein TTE0040.